A 1325-amino-acid chain; its full sequence is Protein PHYTOCHROME-DEPENDENT LATE-FLOWERING (1325 aa).

Composition is skewed to polar residues over residues 313–331 (IGST…SVSG) and 504–515 (NFPQTSWNVNPG). Disordered stretches follow at residues 313–371 (IGST…MPGL), 462–558 (EPFE…EFSG), 593–616 (ANEA…NSLP), 852–875 (VAGQ…NSTQ), and 1160–1325 (QQQQ…GNNS). Positions 518 to 529 (IEKEPKKEEQFS) are enriched in basic and acidic residues. The segment covering 596–607 (AMQQRQHQAQMA) has biased composition (low complexity). Over residues 863–875 (HGNTGNTPNNSTQ) the composition is skewed to polar residues. Positions 1160-1224 (QQQQQQQLQQ…QQQATASPLQ (65 aa)) are enriched in low complexity. Residues 1225–1239 (SVLSPPQVGSPSAGI) are compositionally biased toward polar residues. Residues 1240–1262 (TQQQLQQSSPQQMSQRTPMSPQQ) are compositionally biased toward low complexity. 2 stretches are compositionally biased toward polar residues: residues 1263 to 1286 (VNQR…TSNL) and 1293 to 1325 (PQLS…GNNS).

As to quaternary structure, component of a red light-dependent nuclear complex made of PHL, PHYB and CO. Interacts directly with PHYB and CO; CO binding requires the presence of PHYB. In terms of tissue distribution, mostly expressed in cotyledons and leaves, both in mesophyll and vasculature cells. Also present in roots, hypocotyls and shoot apices.

Its subcellular location is the nucleus. It localises to the nuclear body. The protein resides in the cytoplasmic granule. The protein localises to the cytoplasm. Triggers photoperiod-monitored flowering by repressing PHYB-dependent flowering negative regulation, probably through physical interactions with PHYB and CO. This chain is Protein PHYTOCHROME-DEPENDENT LATE-FLOWERING, found in Arabidopsis thaliana (Mouse-ear cress).